The sequence spans 359 residues: Phospho-N-acetylmuramoyl-pentapeptide-transferase (359 aa).

10 helical membrane passes run 3–23, 55–75, 84–104, 117–137, 156–176, 187–207, 231–251, 255–275, 280–300, and 334–354; these read QIII…PVLI, VAIL…GIAF, GLLV…DDFI, TSKT…VLQF, IATV…LVMS, LDGL…IVTF, LAVI…WNAA, IFMG…LSVT, LLAV…VLQI, and FWLL…GEWL.

This sequence belongs to the glycosyltransferase 4 family. MraY subfamily. Requires Mg(2+) as cofactor.

Its subcellular location is the cell membrane. The catalysed reaction is UDP-N-acetyl-alpha-D-muramoyl-L-alanyl-gamma-D-glutamyl-meso-2,6-diaminopimeloyl-D-alanyl-D-alanine + di-trans,octa-cis-undecaprenyl phosphate = di-trans,octa-cis-undecaprenyl diphospho-N-acetyl-alpha-D-muramoyl-L-alanyl-D-glutamyl-meso-2,6-diaminopimeloyl-D-alanyl-D-alanine + UMP. Its pathway is cell wall biogenesis; peptidoglycan biosynthesis. Functionally, catalyzes the initial step of the lipid cycle reactions in the biosynthesis of the cell wall peptidoglycan: transfers peptidoglycan precursor phospho-MurNAc-pentapeptide from UDP-MurNAc-pentapeptide onto the lipid carrier undecaprenyl phosphate, yielding undecaprenyl-pyrophosphoryl-MurNAc-pentapeptide, known as lipid I. The polypeptide is Phospho-N-acetylmuramoyl-pentapeptide-transferase (Mycobacteroides abscessus (strain ATCC 19977 / DSM 44196 / CCUG 20993 / CIP 104536 / JCM 13569 / NCTC 13031 / TMC 1543 / L948) (Mycobacterium abscessus)).